The primary structure comprises 166 residues: MNSQACLLLQKQLKDLCKHPVDGFSAGLVDEKNIFEWSVTIIGPPDTLYEGGFFYAIMSFPQNYPNSPPTVRFTSDIWHPNVYPDGRVCISILHPPGDDPSGYELASERWTPVHTVESIMLSIISMLSGPNDESPANVEAAKEWREKRDEFKKKVSRCVRKSQEMF.

Residues 4 to 164 enclose the UBC core domain; sequence QACLLLQKQL…VSRCVRKSQE (161 aa). Cys89 functions as the Glycyl thioester intermediate in the catalytic mechanism.

Belongs to the ubiquitin-conjugating enzyme family.

The catalysed reaction is S-ubiquitinyl-[E1 ubiquitin-activating enzyme]-L-cysteine + [E2 ubiquitin-conjugating enzyme]-L-cysteine = [E1 ubiquitin-activating enzyme]-L-cysteine + S-ubiquitinyl-[E2 ubiquitin-conjugating enzyme]-L-cysteine.. It functions in the pathway protein modification; protein ubiquitination. Functionally, accepts the ubiquitin from the E1 complex and catalyzes its covalent attachment to other proteins. Involved in the formation of multiubiquitin chains. Signal the protein for selective degradation. This chain is Ubiquitin-conjugating enzyme E2 13 (UBC13), found in Arabidopsis thaliana (Mouse-ear cress).